Consider the following 283-residue polypeptide: Pantothenate synthetase (283 aa).

Residue 30 to 37 coordinates ATP; sequence MGNLHAGH. Histidine 37 (proton donor) is an active-site residue. Glutamine 61 provides a ligand contact to (R)-pantoate. Glutamine 61 is a beta-alanine binding site. 149–152 contacts ATP; that stretch reads GEKD. Glutamine 155 is a (R)-pantoate binding site. ATP is bound by residues valine 178 and 186–189; that span reads LSSR.

This sequence belongs to the pantothenate synthetase family. As to quaternary structure, homodimer.

The protein localises to the cytoplasm. It catalyses the reaction (R)-pantoate + beta-alanine + ATP = (R)-pantothenate + AMP + diphosphate + H(+). Its pathway is cofactor biosynthesis; (R)-pantothenate biosynthesis; (R)-pantothenate from (R)-pantoate and beta-alanine: step 1/1. Catalyzes the condensation of pantoate with beta-alanine in an ATP-dependent reaction via a pantoyl-adenylate intermediate. This Azotobacter vinelandii (strain DJ / ATCC BAA-1303) protein is Pantothenate synthetase.